Reading from the N-terminus, the 85-residue chain is Small ribosomal subunit protein bS18 (85 aa).

The protein belongs to the bacterial ribosomal protein bS18 family. As to quaternary structure, part of the 30S ribosomal subunit. Forms a tight heterodimer with protein bS6.

Functionally, binds as a heterodimer with protein bS6 to the central domain of the 16S rRNA, where it helps stabilize the platform of the 30S subunit. The protein is Small ribosomal subunit protein bS18 of Hyphomonas neptunium (strain ATCC 15444).